The chain runs to 507 residues: Dolichyl pyrophosphate Man9GlcNAc2 alpha-1,3-glucosyltransferase (507 aa).

At 1–2 (ME) the chain is on the cytoplasmic side. Residues 3-23 (SWPWMAVVVLLGLTVRWTVSL) form a helical membrane-spanning segment. Topologically, residues 24 to 114 (SSYSGAGKPP…SQAHKLFMRA (91 aa)) are lumenal. N-linked (GlcNAc...) asparagine glycosylation occurs at N59. The chain crosses the membrane as a helical span at residues 115 to 135 (TVLAADLLIYVPAVLLYCYSL). At 136–143 (KEISPKRK) the chain is on the cytoplasmic side. A helical transmembrane segment spans residues 144 to 164 (IASALCILLYPGLILIDYGHF). Topologically, residues 165-172 (QYNSVSLG) are lumenal. A helical membrane pass occupies residues 173-193 (FALWGVLGVSWDWDLLGSLAF). Residues 194-229 (CLALNYKQMELYHSLPFFCFLLGKCFKKGLKGKGLA) are Cytoplasmic-facing. A helical transmembrane segment spans residues 230–250 (LFIRIACTVLASFLLCWLPFL). Over 251–297 (TEREHALQVVRRLFPVDRGLFEDKVANIWCSVNVFLKIKDTLPRHIQ) the chain is Lumenal. Residues 298-318 (IAISFCFTLLSLLPACIKLTV) form a helical membrane-spanning segment. At 319–332 (RPSCKGFRFTLVSC) the chain is on the cytoplasmic side. The chain crosses the membrane as a helical span at residues 333-353 (ALSFFLFSFQVHEKSILLVSL). Residues 354–361 (PVCLVLTE) lie on the Lumenal side of the membrane. The chain crosses the membrane as a helical span at residues 362-382 (IPFMSTWFLLVSTFSMLPLLL). The Cytoplasmic segment spans residues 383 to 385 (KDE). The helical transmembrane segment at 386–406 (LLLPSVVTVMAFVIACGTFFP) threads the bilayer. The Lumenal segment spans residues 407–437 (MLENTSEEQLQLKSFAVSVRRHLPGFTFLPR). A helical membrane pass occupies residues 438 to 458 (IMQCLFLSSVITMVLLTILSV). The Cytoplasmic segment spans residues 459-468 (TLDPPQKLPD). A helical membrane pass occupies residues 469 to 489 (LFPVLICFVSCVNFVFFLVYF). Over 490 to 507 (NIVIMWDSKNGRNRKKIE) the chain is Lumenal.

Belongs to the ALG6/ALG8 glucosyltransferase family.

The protein resides in the endoplasmic reticulum membrane. The catalysed reaction is an alpha-D-Man-(1-&gt;2)-alpha-D-Man-(1-&gt;2)-alpha-D-Man-(1-&gt;3)-[alpha-D-Man-(1-&gt;2)-alpha-D-Man-(1-&gt;3)-[alpha-D-Man-(1-&gt;2)-alpha-D-Man-(1-&gt;6)]-alpha-D-Man-(1-&gt;6)]-beta-D-Man-(1-&gt;4)-beta-D-GlcNAc-(1-&gt;4)-alpha-D-GlcNAc-diphospho-di-trans,poly-cis-dolichol + a di-trans,poly-cis-dolichyl beta-D-glucosyl phosphate = an alpha-D-Glc-(1-&gt;3)-alpha-D-Man-(1-&gt;2)-alpha-D-Man-(1-&gt;2)-alpha-D-Man-(1-&gt;3)-[alpha-D-Man-(1-&gt;2)-alpha-D-Man-(1-&gt;3)-[alpha-D-Man-(1-&gt;2)-alpha-D-Man-(1-&gt;6)]-alpha-D-Man-(1-&gt;6)]-beta-D-Man-(1-&gt;4)-beta-D-GlcNAc-(1-&gt;4)-alpha-D-GlcNAc-diphospho-di-trans,poly-cis-dolichol + a di-trans,poly-cis-dolichyl phosphate + H(+). Its pathway is protein modification; protein glycosylation. Dolichyl pyrophosphate Man9GlcNAc2 alpha-1,3-glucosyltransferase that operates in the biosynthetic pathway of dolichol-linked oligosaccharides, the glycan precursors employed in protein asparagine (N)-glycosylation. The assembly of dolichol-linked oligosaccharides begins on the cytosolic side of the endoplasmic reticulum membrane and finishes in its lumen. The sequential addition of sugars to dolichol pyrophosphate produces dolichol-linked oligosaccharides containing fourteen sugars, including two GlcNAcs, nine mannoses and three glucoses. Once assembled, the oligosaccharide is transferred from the lipid to nascent proteins by oligosaccharyltransferases. In the lumen of the endoplasmic reticulum, adds the first glucose residue from dolichyl phosphate glucose (Dol-P-Glc) onto the lipid-linked oligosaccharide intermediate Man(9)GlcNAc(2)-PP-Dol to produce Glc(1)Man(9)GlcNAc(2)-PP-Dol. Glc(1)Man(9)GlcNAc(2)-PP-Dol is a substrate for ALG8, the following enzyme in the biosynthetic pathway. The protein is Dolichyl pyrophosphate Man9GlcNAc2 alpha-1,3-glucosyltransferase of Mus musculus (Mouse).